A 330-amino-acid polypeptide reads, in one-letter code: Malate dehydrogenase (330 aa).

NAD(+) is bound at residue 15–21; the sequence is GAGGQIG. Substrate-binding residues include Arg-95 and Arg-101. Residues Asn-108, Gln-115, and 132 to 134 each bind NAD(+); that span reads VGN. Positions 134 and 165 each coordinate substrate. Residue His-190 is the Proton acceptor of the active site.

This sequence belongs to the LDH/MDH superfamily. MDH type 2 family.

It catalyses the reaction (S)-malate + NAD(+) = oxaloacetate + NADH + H(+). Functionally, catalyzes the reversible oxidation of malate to oxaloacetate. The chain is Malate dehydrogenase from Corynebacterium jeikeium (strain K411).